Reading from the N-terminus, the 342-residue chain is Arginase 1, mitochondrial (342 aa).

Residues 1–22 (MSRIIGRKGINYIHRLNSASFT) constitute a mitochondrion transit peptide. L-ornithine is bound by residues S77 and 96–99 (GSTN). H161, D185, H187, and D189 together coordinate Mn(2+). 189–191 (DIY) is an L-ornithine binding site. 195–197 (EGN) contacts substrate. S224 is an L-ornithine binding site. Mn(2+)-binding residues include D270 and D272. Substrate is bound at residue E313.

The protein belongs to the arginase family. In terms of assembly, forms homohexamers. The cofactor is Mn(2+). In terms of tissue distribution, expressed in vasculature of roots, root tips, cotyledons, leaves, cauline leaves, stems, sepals and pollen.

It localises to the mitochondrion. The catalysed reaction is L-arginine + H2O = urea + L-ornithine. It catalyses the reaction agmatine + H2O = urea + putrescine. Its pathway is nitrogen metabolism; urea cycle; L-ornithine and urea from L-arginine: step 1/1. The protein operates within amine and polyamine biosynthesis; putrescine biosynthesis via agmatine pathway; putrescine from agmatine: step 1/1. In terms of biological role, catalyzes the hydrolysis of L-arginine to urea and L-ornithine. The latter can be utilized in the urea cycle or as a precursor for the synthesis of both polyamines and proline. Possesses agmatinase activity. Catalyzes the formation of putrescine from agmatine. This is Arginase 1, mitochondrial from Arabidopsis thaliana (Mouse-ear cress).